Here is an 821-residue protein sequence, read N- to C-terminus: Protein EFR3 homolog A (821 aa).

Residues serine 360, serine 363, serine 422, and serine 694 each carry the phosphoserine modification.

This sequence belongs to the EFR3 family. Component of a phosphatidylinositol 4-kinase (PI4K) complex, composed of PI4KA, EFR3 (EFR3A or EFR3B), TTC7 (TTC7A or TTC7B) and HYCC (HYCC1 or HYCC2). In terms of processing, palmitoylated at its N-terminus, anchoring the protein to the plasma membrane.

It localises to the cell membrane. It is found in the cytoplasm. Its subcellular location is the cytosol. In terms of biological role, component of a complex required to localize phosphatidylinositol 4-kinase (PI4K) to the plasma membrane. The complex acts as a regulator of phosphatidylinositol 4-phosphate (PtdIns(4)P) synthesis. In the complex, EFR3A probably acts as the membrane-anchoring component. Also involved in responsiveness to G-protein-coupled receptors; it is however unclear whether this role is direct or indirect. This is Protein EFR3 homolog A from Homo sapiens (Human).